The following is a 1135-amino-acid chain: Receptor-type guanylate cyclase gcy-4 (1135 aa).

A signal peptide spans 1-20; that stretch reads MTQLLRFLLILSIFCDFSHS. At 21–483 the chain is on the extracellular side; the sequence is QRPTIRVGIA…CPIPFFDQYR (463 aa). 9 N-linked (GlcNAc...) asparagine glycosylation sites follow: Asn37, Asn193, Asn209, Asn251, Asn349, Asn375, Asn431, Asn436, and Asn447. A helical transmembrane segment spans residues 484–504; that stretch reads LLIFVFVIVAGLLILAIFTCL. Residues 505-1135 are Cytoplasmic-facing; that stretch reads TSMVRNQRAE…VMRREMMRVS (631 aa). The interval 535 to 560 is disordered; sequence KGRRLSTDSENSTVTKSSKGSSSKNF. The Protein kinase domain maps to 545-837; that stretch reads NSTVTKSSKG…KDNLMDHVFS (293 aa). Positions 546 to 560 are enriched in low complexity; sequence STVTKSSKGSSSKNF. The region spanning 895 to 1025 is the Guanylate cyclase domain; that stretch reads TVFFSDLVKF…DTVNTASRME (131 aa).

It belongs to the adenylyl cyclase class-4/guanylyl cyclase family. Expressed bilaterally in ASE neurons.

The protein localises to the cell membrane. The enzyme catalyses GTP = 3',5'-cyclic GMP + diphosphate. In terms of biological role, guanylate cyclase involved in the production of the second messenger cGMP. Regulates chemotaxis responses toward salt ions in ASE sensory neurons. This chain is Receptor-type guanylate cyclase gcy-4, found in Caenorhabditis briggsae.